The following is a 96-amino-acid chain: Conantokin-E (96 aa).

The N-terminal stretch at 1-24 (LLVPLVTFHLILGMGTLDHGGALT) is a signal peptide. A propeptide spanning residues 25–72 (ERRSADATALKPEPVLLQKSDARSTDDNDKDRLTQMKRILKKRGNKAR) is cleaved from the precursor. Positions 28–57 (SADATALKPEPVLLQKSDARSTDDNDKDRL) are disordered. The span at 44 to 57 (SDARSTDDNDKDRL) shows a compositional bias: basic and acidic residues. Glutamate 75, glutamate 76, glutamate 82, glutamate 86, and glutamate 95 each carry 4-carboxyglutamate. A divalent metal cation-binding residues include glutamate 82 and glutamate 86. Cysteine 83 and cysteine 96 form a disulfide bridge.

This sequence belongs to the conotoxin B superfamily. In terms of tissue distribution, expressed by the venom duct.

It is found in the secreted. In terms of biological role, conantokins inhibit N-methyl-D-aspartate (NMDA) receptors. This toxin has the highest potency for the NR2B/GRIN2B subunit, followed by NR2A/GRIN2A, NR2C/GRIN2C, and NR2D/GRIN2D subunits. The chain is Conantokin-E from Conus ermineus (Agate cone).